A 41-amino-acid chain; its full sequence is Large ribosomal subunit protein bL36 (41 aa).

Belongs to the bacterial ribosomal protein bL36 family.

This chain is Large ribosomal subunit protein bL36, found in Xylella fastidiosa (strain M23).